Reading from the N-terminus, the 366-residue chain is Chorismate synthase (366 aa).

Arg-48 and Arg-54 together coordinate NADP(+). FMN-binding positions include 129–131 (RSS), 241–242 (NA), Gly-290, 305–309 (KPTSS), and Arg-331.

Belongs to the chorismate synthase family. Homotetramer. FMNH2 is required as a cofactor.

It carries out the reaction 5-O-(1-carboxyvinyl)-3-phosphoshikimate = chorismate + phosphate. It functions in the pathway metabolic intermediate biosynthesis; chorismate biosynthesis; chorismate from D-erythrose 4-phosphate and phosphoenolpyruvate: step 7/7. In terms of biological role, catalyzes the anti-1,4-elimination of the C-3 phosphate and the C-6 proR hydrogen from 5-enolpyruvylshikimate-3-phosphate (EPSP) to yield chorismate, which is the branch point compound that serves as the starting substrate for the three terminal pathways of aromatic amino acid biosynthesis. This reaction introduces a second double bond into the aromatic ring system. The sequence is that of Chorismate synthase from Nitrobacter hamburgensis (strain DSM 10229 / NCIMB 13809 / X14).